Consider the following 165-residue polypeptide: Selenoprotein F (165 aa).

An N-terminal signal peptide occupies residues 1-31; the sequence is MVAMAAGPSGCLVPAFGLRLLLATVLQAVSA. Residue Sec96 is a non-standard amino acid, selenocysteine.

As to quaternary structure, forms a tight complex with UGGT1/UGCGL1. Interacts with UGGT2/UGCGL2. Interacts with RDH11. Post-translationally, the N-terminus is blocked. Higher levels in prostate and thyroid gland.

The protein localises to the endoplasmic reticulum lumen. Its function is as follows. May be involved in redox reactions associated with the formation of disulfide bonds. May contribute to the quality control of protein folding in the endoplasmic reticulum. May regulate protein folding by enhancing the catalytic activity of UGGT1/UGCGL1 and UGGT2/UGCGL2. The sequence is that of Selenoprotein F from Homo sapiens (Human).